The following is a 408-amino-acid chain: Intracellular coagulation inhibitor 2 (408 aa).

Residues 1-22 (MLSRRTLDCCLVMLIVSTTFCQ) form the signal peptide. C50 and C249 are oxidised to a cystine. The N-linked (GlcNAc...) asparagine glycan is linked to N174.

It belongs to the serpin family. As to quaternary structure, monomer. Forms a covalent heterodimer with clotting factor C chain B. Forms a covalent heterodimer with proclotting enzyme heavy chain. As to expression, specifically expressed in hemocytes (at protein level).

The protein localises to the secreted. Functionally, serine protease inhibitor that inhibits proclotting enzyme and to a lesser extent clotting factor C and clotting factor G. This Tachypleus tridentatus (Japanese horseshoe crab) protein is Intracellular coagulation inhibitor 2.